The primary structure comprises 322 residues: Ribosomal RNA small subunit methyltransferase H (322 aa).

S-adenosyl-L-methionine is bound by residues 34 to 36, aspartate 59, phenylalanine 86, aspartate 112, and glutamine 119; that span reads GGH.

The protein belongs to the methyltransferase superfamily. RsmH family.

The protein localises to the cytoplasm. The catalysed reaction is cytidine(1402) in 16S rRNA + S-adenosyl-L-methionine = N(4)-methylcytidine(1402) in 16S rRNA + S-adenosyl-L-homocysteine + H(+). Its function is as follows. Specifically methylates the N4 position of cytidine in position 1402 (C1402) of 16S rRNA. The protein is Ribosomal RNA small subunit methyltransferase H of Chlorobium limicola (strain DSM 245 / NBRC 103803 / 6330).